Reading from the N-terminus, the 386-residue chain is Demethylsterigmatocystin 6-O-methyltransferase (386 aa).

137–150 (FDISGPCTQILPDF) is a binding site for substrate. Residues 177–197 (MFEWMPQHPKHMESLGHLMAL) are substrate binding. Residues 228-229 (GG), D253, 273-274 (NF), and R289 each bind S-adenosyl-L-methionine. H293 (proton acceptor) is an active-site residue.

This sequence belongs to the class I-like SAM-binding methyltransferase superfamily. Cation-independent O-methyltransferase family. COMT subfamily.

It catalyses the reaction 6-demethylsterigmatocystin + S-adenosyl-L-methionine = sterigmatocystin + S-adenosyl-L-homocysteine + H(+). Its pathway is mycotoxin biosynthesis; aflatoxin biosynthesis. Functionally, demethylsterigmatocystin 6-O-methyltransferase; part of the gene cluster that mediates the biosynthesis of aflatoxins, a group of polyketide-derived furanocoumarins, and part of the most toxic and carcinogenic compounds among the known mycotoxins. The four major aflatoxins produced by A.parasiticus are aflatoxin B1 (AFB1), aflatoxin B2 (AFB2), aflatoxin G1 (AFG1) and aflatoxin G2 (AFG2). Within the aflatoxin pathway, the methyltransferase aflO then catalyzes the modification of demethylsterigmatocystin (DMST) to sterigmatocystin (ST), and of dihydrodemethylsterigmatocystin (DMDHST) to dihydrosterigmatocystin (DHST). The biosynthesis of aflatoxins begins with the norsolorinic acid synthase aflC that combines a hexanoyl starter unit produced by the fatty acid synthase aflA/aflB and 7 malonyl-CoA extender units to synthesize the precursor NOR. The second step is the conversion of NOR to averantin and requires the norsolorinic acid ketoreductase aflD, which catalyzes the dehydration of norsolorinic acid to form (1'S)-averantin. The norsolorinic acid reductases aflE and aflF may also play a role in the conversion of NOR to AVN. The cytochrome P450 monooxygenase aflG then catalyzes the hydroxylation of AVN to 5'hydroxyaverantin (HAVN). The next step is performed by the 5'-hydroxyaverantin dehydrogenase aflH that transforms HAVN to 5'-oxoaverantin (OAVN) which is further converted to averufin (AVF) by aflK that plays a dual role in the pathway, as a 5'-oxoaverantin cyclase that mediates conversion of 5'-oxoaverantin, as well as a versicolorin B synthase in a later step in the pathway. The averufin oxidase aflI catalyzes the conversion of AVF to versiconal hemiacetal acetate (VHA). VHA is then the substrate for the versiconal hemiacetal acetate esterase aflJ to yield versiconal (VAL). Versicolorin B synthase aflK then converts VAL to versicolorin B (VERB) by closing the bisfuran ring of aflatoxin which is required for DNA-binding, thus giving to aflatoxin its activity as a mutagen. Then, the activity of the versicolorin B desaturase aflL leads to versicolorin A (VERA). A branch point starts from VERB since it can also be converted to dihydrodemethylsterigmatocystin (DMDHST), probably also by aflL, VERA being a precursor for aflatoxins B1 and G1, and DMDHST for aflatoxins B2 and G2. Next, the versicolorin reductase aflM and the cytochrome P450 monooxygenase aflN are involved in conversion of VERA to demethylsterigmatocystin (DMST). AflX and aflY seem also involved in this step, through probable aflX-mediated epoxide ring-opening step following versicolorin A oxidation and aflY-mediated Baeyer-Villiger oxidation required for the formation of the xanthone ring. The methyltransferase aflO then leads to the modification of DMST to sterigmatocystin (ST), and of DMDHST to dihydrosterigmatocystin (DHST). Both ST and DHST are then substrates of the O-methyltransferase aflP to yield O-methylsterigmatocystin (OMST) and dihydro-O-methylsterigmatocystin (DHOMST), respectively. Finally OMST is converted to aflatoxins B1 and G1, and DHOMST to aflatoxins B2 and G2, via the action of several enzymes including O-methylsterigmatocystin oxidoreductase aflQ, the cytochrome P450 monooxygenase aflU, but also the NADH-dependent flavin oxidoreductase nadA which is specifically required for the synthesis of AFG1. The sequence is that of Demethylsterigmatocystin 6-O-methyltransferase from Aspergillus parasiticus (strain ATCC 56775 / NRRL 5862 / SRRC 143 / SU-1).